Consider the following 1343-residue polypeptide: Xanthine dehydrogenase (1343 aa).

The 2Fe-2S ferredoxin-type domain maps to 8 to 95 (SELVFFVNGK…GCAVTTVEGI (88 aa)). [2Fe-2S] cluster-binding residues include cysteine 47, cysteine 52, cysteine 55, cysteine 77, cysteine 117, cysteine 120, cysteine 152, and cysteine 154. In terms of domain architecture, FAD-binding PCMH-type spans 235–424 (FSSERVTWYR…LGIHFQKTTP (190 aa)). FAD contacts are provided by residues 263–270 (LVVGNTEV), phenylalanine 343, 353–357 (CLGGN), aspartate 366, leucine 414, and lysine 432. Positions 780 and 811 each coordinate Mo-molybdopterin. Residues glutamate 815 and arginine 893 each contribute to the substrate site. Arginine 925 contacts Mo-molybdopterin. Phenylalanine 927 is a substrate binding site. Alanine 1092 provides a ligand contact to Mo-molybdopterin. The active-site Proton acceptor is the glutamate 1275.

This sequence belongs to the xanthine dehydrogenase family. As to quaternary structure, homodimer. FAD serves as cofactor. Requires Mo-molybdopterin as cofactor. The cofactor is [2Fe-2S] cluster.

The protein localises to the peroxisome. It carries out the reaction xanthine + NAD(+) + H2O = urate + NADH + H(+). It catalyses the reaction hypoxanthine + NAD(+) + H2O = xanthine + NADH + H(+). Functionally, key enzyme in purine degradation. Catalyzes the oxidation of hypoxanthine to xanthine. Catalyzes the oxidation of xanthine to uric acid. This is Xanthine dehydrogenase (ry) from Drosophila pseudoobscura pseudoobscura (Fruit fly).